The primary structure comprises 235 residues: MESSKTFMRQMPITPGYSGFVPYLSCQGTSSEDNMANCLKIFQENTRRCKDQLEEFHCSVATAPKLKPVRSEGTVLRTLHQYYRQYHPLSLECKNIKKPLHEPPIPGWAGYLPRARVTELGCSTRYTVMARNCYRDFLDLMERAKQAHLKPYEKIYGVKSTPPPPTPPPKVLLHEGLLPKYPDFSIPGARCPTLSRALMEDPRPLMTCGCPQRPSVWCSGKIYLEPLSGGKDMEG.

Microtubule inner protein component of sperm flagellar doublet microtubules. As to expression, expressed in sperm.

Its subcellular location is the cytoplasm. The protein localises to the cytoskeleton. It is found in the flagellum axoneme. It localises to the nucleus. In terms of biological role, microtubule inner protein (MIP) part of the dynein-decorated doublet microtubules (DMTs) in flagellum axoneme. May serve to reinforce and thus stabilize the microtubule structure in the sperm flagella. The protein is Sperm-associated microtubule inner protein 5 (SPMIP5) of Bos taurus (Bovine).